Here is a 366-residue protein sequence, read N- to C-terminus: Tetraacyldisaccharide 4'-kinase (366 aa).

65–72 contributes to the ATP binding site; sequence TVGGTGKT. A disordered region spans residues 343 to 366; the sequence is AKSTPASGGATGLNKEHQDGQPAA. Over residues 356-366 the composition is skewed to basic and acidic residues; the sequence is NKEHQDGQPAA.

This sequence belongs to the LpxK family.

The catalysed reaction is a lipid A disaccharide + ATP = a lipid IVA + ADP + H(+). The protein operates within glycolipid biosynthesis; lipid IV(A) biosynthesis; lipid IV(A) from (3R)-3-hydroxytetradecanoyl-[acyl-carrier-protein] and UDP-N-acetyl-alpha-D-glucosamine: step 6/6. In terms of biological role, transfers the gamma-phosphate of ATP to the 4'-position of a tetraacyldisaccharide 1-phosphate intermediate (termed DS-1-P) to form tetraacyldisaccharide 1,4'-bis-phosphate (lipid IVA). This is Tetraacyldisaccharide 4'-kinase from Cupriavidus pinatubonensis (strain JMP 134 / LMG 1197) (Cupriavidus necator (strain JMP 134)).